Reading from the N-terminus, the 59-residue chain is Protein translocase subunit SecE (59 aa).

The chain crosses the membrane as a helical span at residues 39–59; sequence VMALFLGLIDALFVALLSFFF.

The protein belongs to the SecE/SEC61-gamma family. In terms of assembly, component of the Sec protein translocase complex. Heterotrimer consisting of SecY, SecE and SecG subunits. The heterotrimers can form oligomers, although 1 heterotrimer is thought to be able to translocate proteins. Interacts with the ribosome. Interacts with SecDF, and other proteins may be involved. Interacts with SecA.

It is found in the cell inner membrane. Essential subunit of the Sec protein translocation channel SecYEG. Clamps together the 2 halves of SecY. May contact the channel plug during translocation. The chain is Protein translocase subunit SecE from Treponema pallidum (strain Nichols).